The following is a 146-amino-acid chain: HTH-type transcriptional regulator FarR (146 aa).

The HTH marR-type domain maps to 7-139 (HASINIGLIQ…LKDLLAELAK (133 aa)). The H-T-H motif DNA-binding region spans 53–76 (FQDLANQACILRPSLTGILTRLEK).

Its activity is regulated as follows. Repressor activity requires the presence of the Integration Host Factor (IHF), which binds to sequences located between FarR binding sites A and C. IHF binding to the promoter region stabilizes the binding of FarR to its binding sites A and C and as a consequence, enhances repression of the farAB operon. Negatively controls expression of the farAB operon by binding directly to the farAB promoter region. Binds to three sites (sites A, B and C) within the DNA sequence upstream of farA. Also represses its own expression. The polypeptide is HTH-type transcriptional regulator FarR (Neisseria gonorrhoeae).